The sequence spans 352 residues: tRNA-specific 2-thiouridylase MnmA (352 aa).

6–13 (AVSGGTDS) contacts ATP. Cys-92 (nucleophile) is an active-site residue. Cysteines 92 and 189 form a disulfide. Position 116 (Gly-116) interacts with ATP. The tract at residues 139–141 (KDQ) is interaction with tRNA. Cys-189 (cysteine persulfide intermediate) is an active-site residue. An interaction with tRNA region spans residues 294–295 (RY).

It belongs to the MnmA/TRMU family.

Its subcellular location is the cytoplasm. The enzyme catalyses S-sulfanyl-L-cysteinyl-[protein] + uridine(34) in tRNA + AH2 + ATP = 2-thiouridine(34) in tRNA + L-cysteinyl-[protein] + A + AMP + diphosphate + H(+). Catalyzes the 2-thiolation of uridine at the wobble position (U34) of tRNA, leading to the formation of s(2)U34. The sequence is that of tRNA-specific 2-thiouridylase MnmA from Lawsonia intracellularis (strain PHE/MN1-00).